Reading from the N-terminus, the 453-residue chain is Bifunctional protein GlmU (453 aa).

The pyrophosphorylase stretch occupies residues 1-226; the sequence is MAFSVVILAA…EIEVEGINNR (226 aa). Residues 8–11, K22, Q73, and 78–79 each bind UDP-N-acetyl-alpha-D-glucosamine; these read LAAG and GT. D102 contacts Mg(2+). UDP-N-acetyl-alpha-D-glucosamine contacts are provided by G137, E151, N166, and N224. Residue N224 coordinates Mg(2+). The tract at residues 227 to 247 is linker; that stretch reads KQLAAIERAFQFEQAQELMMQ. The segment at 248–453 is N-acetyltransferase; sequence GVSLLDPHRF…SGWQRPTKPE (206 aa). Positions 330 and 348 each coordinate UDP-N-acetyl-alpha-D-glucosamine. H360 (proton acceptor) is an active-site residue. Positions 363 and 374 each coordinate UDP-N-acetyl-alpha-D-glucosamine. Acetyl-CoA contacts are provided by residues A377, 383 to 384, S402, A420, and R437; that span reads NY.

The protein in the N-terminal section; belongs to the N-acetylglucosamine-1-phosphate uridyltransferase family. This sequence in the C-terminal section; belongs to the transferase hexapeptide repeat family. In terms of assembly, homotrimer. Mg(2+) serves as cofactor.

It is found in the cytoplasm. It carries out the reaction alpha-D-glucosamine 1-phosphate + acetyl-CoA = N-acetyl-alpha-D-glucosamine 1-phosphate + CoA + H(+). The enzyme catalyses N-acetyl-alpha-D-glucosamine 1-phosphate + UTP + H(+) = UDP-N-acetyl-alpha-D-glucosamine + diphosphate. It functions in the pathway nucleotide-sugar biosynthesis; UDP-N-acetyl-alpha-D-glucosamine biosynthesis; N-acetyl-alpha-D-glucosamine 1-phosphate from alpha-D-glucosamine 6-phosphate (route II): step 2/2. Its pathway is nucleotide-sugar biosynthesis; UDP-N-acetyl-alpha-D-glucosamine biosynthesis; UDP-N-acetyl-alpha-D-glucosamine from N-acetyl-alpha-D-glucosamine 1-phosphate: step 1/1. It participates in bacterial outer membrane biogenesis; LPS lipid A biosynthesis. Functionally, catalyzes the last two sequential reactions in the de novo biosynthetic pathway for UDP-N-acetylglucosamine (UDP-GlcNAc). The C-terminal domain catalyzes the transfer of acetyl group from acetyl coenzyme A to glucosamine-1-phosphate (GlcN-1-P) to produce N-acetylglucosamine-1-phosphate (GlcNAc-1-P), which is converted into UDP-GlcNAc by the transfer of uridine 5-monophosphate (from uridine 5-triphosphate), a reaction catalyzed by the N-terminal domain. In Pseudoalteromonas atlantica (strain T6c / ATCC BAA-1087), this protein is Bifunctional protein GlmU.